Reading from the N-terminus, the 141-residue chain is Putative pre-16S rRNA nuclease (141 aa).

This sequence belongs to the YqgF nuclease family.

Its subcellular location is the cytoplasm. In terms of biological role, could be a nuclease involved in processing of the 5'-end of pre-16S rRNA. The sequence is that of Putative pre-16S rRNA nuclease from Vibrio parahaemolyticus serotype O3:K6 (strain RIMD 2210633).